Here is a 161-residue protein sequence, read N- to C-terminus: MIDSEGFRPNVGIILANDDGQVLWAKRIGHNAWQFPQGGIQFGETPEQALFRELREEIGLLPEHVQIIAQTKGWLRYRLPHRYIRSDSDPVCIGQKQKWFLLKLTAPAKNIQLNLADPPEFDEWQWVSYWYPLGQVVNFKRDVYRKAMVELCTQLPVQQLP.

The Nudix hydrolase domain maps to 6 to 149; sequence GFRPNVGIIL…KRDVYRKAMV (144 aa). The short motif at 38–59 is the Nudix box element; that stretch reads GGIQFGETPEQALFRELREEIG.

The protein belongs to the Nudix hydrolase family. RppH subfamily. The cofactor is a divalent metal cation.

Accelerates the degradation of transcripts by removing pyrophosphate from the 5'-end of triphosphorylated RNA, leading to a more labile monophosphorylated state that can stimulate subsequent ribonuclease cleavage. This chain is RNA pyrophosphohydrolase, found in Acinetobacter baumannii (strain AB307-0294).